The following is a 415-amino-acid chain: F-box protein ETP1 (415 aa).

The F-box domain maps to 1–46 (MTIPDLCNDLVDEILCRVPARNLKRLRSTSKRWNRLFKDDRRFARE).

In terms of assembly, interacts with EIN2 (via C-terminus).

Its function is as follows. Negative regulator of EIN2 protein stability. The sequence is that of F-box protein ETP1 from Arabidopsis thaliana (Mouse-ear cress).